The following is an 837-amino-acid chain: Anaphase-promoting complex subunit 2 (837 aa).

Phosphoserine is present on residues serine 233, serine 329, serine 485, serine 549, and serine 712. The interval 478–508 (CLETGQDSEDDSGEPEDWVPDPVDADPVKSS) is disordered. A compositionally biased stretch (acidic residues) spans 483 to 496 (QDSEDDSGEPEDWV). The residue at position 825 (tyrosine 825) is a Phosphotyrosine.

The protein belongs to the cullin family. The mammalian APC/C is composed at least of 14 distinct subunits ANAPC1, ANAPC2, CDC27/APC3, ANAPC4, ANAPC5, CDC16/APC6, ANAPC7, CDC23/APC8, ANAPC10, ANAPC11, CDC26/APC12, ANAPC13, ANAPC15 and ANAPC16 that assemble into a complex of at least 19 chains with a combined molecular mass of around 1.2 MDa; APC/C interacts with FZR1 and FBXO5. In the context of the APC/C complex, directly interacts with UBE2C and UBE2S. Interacts (via cullin domain) with ANAPC11 and with UBCH10. Interacts with NEUROD2. Interacts with FBXO43; the interaction is direct.

It functions in the pathway protein modification; protein ubiquitination. Its function is as follows. Together with the RING-H2 protein ANAPC11, constitutes the catalytic component of the anaphase promoting complex/cyclosome (APC/C), a cell cycle-regulated E3 ubiquitin ligase that controls progression through mitosis and the G1 phase of the cell cycle. The APC/C complex acts by mediating ubiquitination and subsequent degradation of target proteins: it mainly mediates the formation of 'Lys-11'-linked polyubiquitin chains and, to a lower extent, the formation of 'Lys-48'- and 'Lys-63'-linked polyubiquitin chains. The APC/C complex catalyzes assembly of branched 'Lys-11'-/'Lys-48'-linked branched ubiquitin chains on target proteins. The CDC20-APC/C complex positively regulates the formation of synaptic vesicle clustering at active zone to the presynaptic membrane in postmitotic neurons. CDC20-APC/C-induced degradation of NEUROD2 drives presynaptic differentiation. In Mus musculus (Mouse), this protein is Anaphase-promoting complex subunit 2 (Anapc2).